A 208-amino-acid chain; its full sequence is Small ribosomal subunit protein uS4 (208 aa).

An S4 RNA-binding domain is found at 95 to 159; that stretch reads TIIDNIVYRA…LKKLIGSNIE (65 aa).

It belongs to the universal ribosomal protein uS4 family. Part of the 30S ribosomal subunit. Contacts protein S5. The interaction surface between S4 and S5 is involved in control of translational fidelity.

Functionally, one of the primary rRNA binding proteins, it binds directly to 16S rRNA where it nucleates assembly of the body of the 30S subunit. Its function is as follows. With S5 and S12 plays an important role in translational accuracy. In Borreliella afzelii (strain PKo) (Borrelia afzelii), this protein is Small ribosomal subunit protein uS4.